The primary structure comprises 253 residues: Transcriptional regulatory protein TcrA (253 aa).

Residues 24-138 form the Response regulatory domain; that stretch reads RILVVEDEPK…ELFARLRALS (115 aa). A 4-aspartylphosphate modification is found at D73. Residues 146–244 constitute a DNA-binding region (ompR/PhoB-type); it reads PPTLEAGDLR…IRGAGYRLRK (99 aa).

In terms of assembly, interacts with HK2. Post-translationally, phosphorylated by HK2.

The protein resides in the cytoplasm. In terms of biological role, member of the three-protein two-component system HK1/HK2/TcrA. The polypeptide is Transcriptional regulatory protein TcrA (tcrA) (Mycobacterium tuberculosis (strain ATCC 25618 / H37Rv)).